We begin with the raw amino-acid sequence, 324 residues long: Beta-ketoacyl-[acyl-carrier-protein] synthase III (324 aa).

Active-site residues include Cys-112 and His-249. The ACP-binding stretch occupies residues 250–254 (QANDR). Asn-279 is a catalytic residue.

Belongs to the thiolase-like superfamily. FabH family. Homodimer.

The protein localises to the cytoplasm. The enzyme catalyses malonyl-[ACP] + acetyl-CoA + H(+) = 3-oxobutanoyl-[ACP] + CO2 + CoA. It participates in lipid metabolism; fatty acid biosynthesis. Its function is as follows. Catalyzes the condensation reaction of fatty acid synthesis by the addition to an acyl acceptor of two carbons from malonyl-ACP. Catalyzes the first condensation reaction which initiates fatty acid synthesis and may therefore play a role in governing the total rate of fatty acid production. Possesses both acetoacetyl-ACP synthase and acetyl transacylase activities. Its substrate specificity determines the biosynthesis of branched-chain and/or straight-chain of fatty acids. The sequence is that of Beta-ketoacyl-[acyl-carrier-protein] synthase III from Streptococcus pneumoniae serotype 2 (strain D39 / NCTC 7466).